Here is an 87-residue protein sequence, read N- to C-terminus: Kappa-2-bungarotoxin (87 aa).

A signal peptide spans 1–21 (MKTLLLTLVVVTIVCLDLGYT). Cystine bridges form between Cys-24-Cys-42, Cys-35-Cys-63, Cys-48-Cys-52, Cys-67-Cys-79, and Cys-80-Cys-85.

It belongs to the three-finger toxin family. Long-chain subfamily. Kappa-neurotoxin sub-subfamily. As to quaternary structure, homodimer and heterodimer with kappa 3-bungarotoxin; non-covalently linked. As to expression, expressed by the venom gland.

The protein resides in the secreted. Postsynaptic neurotoxin that binds and inhibits neuronal nicotinic acetylcholine receptors (nAChR) with high affinity (IC(50)&lt;100 nM). Is a selective, and slowly reversible antagonist of alpha-3/CHRNA3-containing and some alpha-4/CHRNA4-containing AChRs. The protein is Kappa-2-bungarotoxin of Bungarus multicinctus (Many-banded krait).